The primary structure comprises 521 residues: GMP synthase [glutamine-hydrolyzing] (521 aa).

The 196-residue stretch at 8-203 (KILILDFGAQ…VVDVCGCQTL (196 aa)) folds into the Glutamine amidotransferase type-1 domain. Cysteine 85 (nucleophile) is an active-site residue. Active-site residues include histidine 177 and glutamate 179. The region spanning 204 to 396 (WTAANIIDDQ…LGLPRTMVYR (193 aa)) is the GMPS ATP-PPase domain. Residue 231–237 (SGGVDSS) participates in ATP binding.

In terms of assembly, homodimer.

It catalyses the reaction XMP + L-glutamine + ATP + H2O = GMP + L-glutamate + AMP + diphosphate + 2 H(+). Its pathway is purine metabolism; GMP biosynthesis; GMP from XMP (L-Gln route): step 1/1. Catalyzes the synthesis of GMP from XMP. This is GMP synthase [glutamine-hydrolyzing] from Stenotrophomonas maltophilia (strain K279a).